A 451-amino-acid polypeptide reads, in one-letter code: Phosphoglucosamine mutase (451 aa).

Ser101 acts as the Phosphoserine intermediate in catalysis. Residues Ser101, Asp240, Asp242, and Asp244 each coordinate Mg(2+). Ser101 is modified (phosphoserine).

The protein belongs to the phosphohexose mutase family. It depends on Mg(2+) as a cofactor. Activated by phosphorylation.

The enzyme catalyses alpha-D-glucosamine 1-phosphate = D-glucosamine 6-phosphate. Its function is as follows. Catalyzes the conversion of glucosamine-6-phosphate to glucosamine-1-phosphate. This chain is Phosphoglucosamine mutase, found in Nitrosococcus oceani (strain ATCC 19707 / BCRC 17464 / JCM 30415 / NCIMB 11848 / C-107).